Reading from the N-terminus, the 420-residue chain is ATP phosphoribosyltransferase regulatory subunit (420 aa).

This sequence belongs to the class-II aminoacyl-tRNA synthetase family. HisZ subfamily. Heteromultimer composed of HisG and HisZ subunits.

It is found in the cytoplasm. It participates in amino-acid biosynthesis; L-histidine biosynthesis; L-histidine from 5-phospho-alpha-D-ribose 1-diphosphate: step 1/9. Functionally, required for the first step of histidine biosynthesis. May allow the feedback regulation of ATP phosphoribosyltransferase activity by histidine. This chain is ATP phosphoribosyltransferase regulatory subunit, found in Bacillus thuringiensis (strain Al Hakam).